The following is a 110-amino-acid chain: Prothymosin alpha (110 aa).

Methionine 1 is subject to N-acetylmethionine. The segment at 1–110 is disordered; that stretch reads MSDAAVDTSS…TKKQKTDEDD (110 aa). The residue at position 2 (serine 2) is an N-acetylserine; in Prothymosin alpha, N-terminally processed. Serine 2 bears the Phosphoserine mark. Threonine 8 bears the Phosphothreonine; by CK2 mark. Serine 9 and serine 10 each carry phosphoserine. Residues threonine 13 and threonine 14 each carry the phosphothreonine; by CK2 modification. Positions 13–31 are enriched in basic and acidic residues; it reads TTKDLKEKKEVVEEAENGR. Lysine 15 bears the N6-acetyllysine; alternate mark. Lysine 15 is subject to N6-succinyllysine; alternate. Over residues 32 to 41 the composition is skewed to low complexity; the sequence is EAPANGNANE. Acidic residues predominate over residues 42–83; the sequence is ENGEQEADNEVDEEEEEGGEEEEEEEEGDGEEEDGDEDEEAE. The span at 100 to 110 shows a compositional bias: basic and acidic residues; that stretch reads DTKKQKTDEDD. Threonine 101 carries the phosphothreonine modification. Position 102 is an N6-acetyllysine; alternate (lysine 102). Lysine 102 is covalently cross-linked (Glycyl lysine isopeptide (Lys-Gly) (interchain with G-Cter in SUMO2); alternate). A Phosphothreonine modification is found at threonine 106.

It belongs to the pro/parathymosin family. Interacts with NUPR1; regulates apoptotic process. In terms of processing, covalently linked to a small RNA of about 20 nucleotides.

The protein localises to the nucleus. Its function is as follows. Prothymosin alpha may mediate immune function by conferring resistance to certain opportunistic infections. The chain is Prothymosin alpha (PTMA) from Bos taurus (Bovine).